A 121-amino-acid polypeptide reads, in one-letter code: Large ribosomal subunit protein bL20 (121 aa).

This sequence belongs to the bacterial ribosomal protein bL20 family.

Binds directly to 23S ribosomal RNA and is necessary for the in vitro assembly process of the 50S ribosomal subunit. It is not involved in the protein synthesizing functions of that subunit. This Roseobacter denitrificans (strain ATCC 33942 / OCh 114) (Erythrobacter sp. (strain OCh 114)) protein is Large ribosomal subunit protein bL20.